Here is a 468-residue protein sequence, read N- to C-terminus: Factor XIIa inhibitor (468 aa).

An N-terminal signal peptide occupies residues 1–23; that stretch reads MASRLTPLTLLLLLLLAGDRVTS. A disordered region spans residues 27-60; it reads VGPGNLQEGESEGDSQKGGILDGESIQGNEDSPT. N-linked (GlcNAc...) asparagine glycosylation is found at asparagine 65, asparagine 176, asparagine 227, and asparagine 326. 2 disulfides stabilise this stretch: cysteine 97/cysteine 396 and cysteine 104/cysteine 179.

The protein belongs to the serpin family. N- and O-glycosylated.

The protein resides in the secreted. In terms of biological role, may play a potentially crucial role in regulating important physiological pathways including complement activation, blood coagulation, fibrinolysis and the generation of kinins. This is Factor XIIa inhibitor from Bos taurus (Bovine).